A 200-amino-acid polypeptide reads, in one-letter code: Phospholipase A2 inhibitor gamma subunit B (200 aa).

Positions 1-19 are cleaved as a signal peptide; sequence MKFLLFCCLFGTFLATGMC. Cystine bridges form between cysteine 22–cysteine 46, cysteine 25–cysteine 32, cysteine 39–cysteine 67, cysteine 73–cysteine 94, cysteine 95–cysteine 100, cysteine 120–cysteine 145, cysteine 138–cysteine 165, and cysteine 171–cysteine 191.

This sequence belongs to the CNF-like-inhibitor family. Heteromer composed of subunit A and subunit B.

The protein localises to the secreted. In terms of biological role, inhibits the enzymatic activity of the phospholipase A2 (PLA2). The protein is Phospholipase A2 inhibitor gamma subunit B of Elaphe climacophora (Japanese rat snake).